The primary structure comprises 226 residues: 3-dehydroquinate dehydratase (226 aa).

Residues serine 9, 32–34 (EVR), and arginine 59 each bind 3-dehydroquinate. Histidine 119 serves as the catalytic Proton donor/acceptor. The active-site Schiff-base intermediate with substrate is lysine 146. Positions 187, 208, and 212 each coordinate 3-dehydroquinate.

Belongs to the type-I 3-dehydroquinase family. In terms of assembly, homodimer.

The enzyme catalyses 3-dehydroquinate = 3-dehydroshikimate + H2O. It participates in metabolic intermediate biosynthesis; chorismate biosynthesis; chorismate from D-erythrose 4-phosphate and phosphoenolpyruvate: step 3/7. Involved in the third step of the chorismate pathway, which leads to the biosynthesis of aromatic amino acids. Catalyzes the cis-dehydration of 3-dehydroquinate (DHQ) and introduces the first double bond of the aromatic ring to yield 3-dehydroshikimate. This Desulfotalea psychrophila (strain LSv54 / DSM 12343) protein is 3-dehydroquinate dehydratase.